The following is a 382-amino-acid chain: Carbamoyl phosphate synthase small chain (382 aa).

The tract at residues 1-187 (MPTPALLVLA…EFRPQTATEE (187 aa)) is CPSase. 3 residues coordinate L-glutamine: Ser47, Gly239, and Gly241. One can recognise a Glutamine amidotransferase type-1 domain in the interval 191 to 377 (TVVAIDFGVK…VAQMRAYRQQ (187 aa)). The Nucleophile role is filled by Cys267. L-glutamine is bound by residues Leu268, Gln271, Asn307, Gly309, and Phe310. Residues His350 and Glu352 contribute to the active site.

It belongs to the CarA family. In terms of assembly, composed of two chains; the small (or glutamine) chain promotes the hydrolysis of glutamine to ammonia, which is used by the large (or ammonia) chain to synthesize carbamoyl phosphate. Tetramer of heterodimers (alpha,beta)4.

The enzyme catalyses hydrogencarbonate + L-glutamine + 2 ATP + H2O = carbamoyl phosphate + L-glutamate + 2 ADP + phosphate + 2 H(+). It catalyses the reaction L-glutamine + H2O = L-glutamate + NH4(+). Its pathway is amino-acid biosynthesis; L-arginine biosynthesis; carbamoyl phosphate from bicarbonate: step 1/1. It functions in the pathway pyrimidine metabolism; UMP biosynthesis via de novo pathway; (S)-dihydroorotate from bicarbonate: step 1/3. In terms of biological role, small subunit of the glutamine-dependent carbamoyl phosphate synthetase (CPSase). CPSase catalyzes the formation of carbamoyl phosphate from the ammonia moiety of glutamine, carbonate, and phosphate donated by ATP, constituting the first step of 2 biosynthetic pathways, one leading to arginine and/or urea and the other to pyrimidine nucleotides. The small subunit (glutamine amidotransferase) binds and cleaves glutamine to supply the large subunit with the substrate ammonia. In Thermosynechococcus vestitus (strain NIES-2133 / IAM M-273 / BP-1), this protein is Carbamoyl phosphate synthase small chain.